The chain runs to 1297 residues: Phosphoribosylformylglycinamidine synthase (1297 aa).

Residues 307-318 and alanine 678 contribute to the ATP site; that span reads GASTGSGGEIRD. Mg(2+) contacts are provided by glutamate 718, asparagine 722, and aspartate 886. Positions 1044–1297 constitute a Glutamine amidotransferase type-1 domain; sequence MAILREQGVN…MFQNARKNLA (254 aa). The Nucleophile role is filled by cysteine 1137. Catalysis depends on residues histidine 1262 and glutamate 1264.

It in the N-terminal section; belongs to the FGAMS family. Monomer.

It localises to the cytoplasm. The enzyme catalyses N(2)-formyl-N(1)-(5-phospho-beta-D-ribosyl)glycinamide + L-glutamine + ATP + H2O = 2-formamido-N(1)-(5-O-phospho-beta-D-ribosyl)acetamidine + L-glutamate + ADP + phosphate + H(+). Its pathway is purine metabolism; IMP biosynthesis via de novo pathway; 5-amino-1-(5-phospho-D-ribosyl)imidazole from N(2)-formyl-N(1)-(5-phospho-D-ribosyl)glycinamide: step 1/2. In terms of biological role, phosphoribosylformylglycinamidine synthase involved in the purines biosynthetic pathway. Catalyzes the ATP-dependent conversion of formylglycinamide ribonucleotide (FGAR) and glutamine to yield formylglycinamidine ribonucleotide (FGAM) and glutamate. The polypeptide is Phosphoribosylformylglycinamidine synthase (Vibrio vulnificus (strain YJ016)).